The chain runs to 144 residues: Ribonuclease H (144 aa).

One can recognise an RNase H type-1 domain in the interval 1-141 (MDKIDIYSDG…ADALANRGVE (141 aa)). The Mg(2+) site is built by aspartate 9, glutamate 47, aspartate 69, and aspartate 133.

It belongs to the RNase H family. Monomer. The cofactor is Mg(2+).

The protein resides in the cytoplasm. It catalyses the reaction Endonucleolytic cleavage to 5'-phosphomonoester.. Endonuclease that specifically degrades the RNA of RNA-DNA hybrids. In Janthinobacterium sp. (strain Marseille) (Minibacterium massiliensis), this protein is Ribonuclease H.